A 53-amino-acid polypeptide reads, in one-letter code: Large ribosomal subunit protein bL32c (53 aa).

It belongs to the bacterial ribosomal protein bL32 family.

The protein localises to the plastid. Its subcellular location is the chloroplast. The sequence is that of Large ribosomal subunit protein bL32c (rpl32) from Guillardia theta (Cryptophyte).